A 449-amino-acid polypeptide reads, in one-letter code: tRNA (guanine(37)-N(1))-methyltransferase (449 aa).

Residues histidine 216, 254–255 (DL), 282–283 (DG), and asparagine 345 contribute to the S-adenosyl-L-methionine site.

It belongs to the class I-like SAM-binding methyltransferase superfamily. TRM5/TYW2 family. As to quaternary structure, monomer.

The protein resides in the mitochondrion matrix. It localises to the nucleus. The protein localises to the cytoplasm. It catalyses the reaction guanosine(37) in tRNA + S-adenosyl-L-methionine = N(1)-methylguanosine(37) in tRNA + S-adenosyl-L-homocysteine + H(+). In terms of biological role, specifically methylates the N1 position of guanosine-37 in various cytoplasmic and mitochondrial tRNAs. Methylation is not dependent on the nature of the nucleoside 5' of the target nucleoside. This is the first step in the biosynthesis of wybutosine (yW), a modified base adjacent to the anticodon of tRNAs and required for accurate decoding. This is tRNA (guanine(37)-N(1))-methyltransferase from Candida albicans (strain WO-1) (Yeast).